Here is a 1362-residue protein sequence, read N- to C-terminus: Bromodomain-containing protein 4 (1362 aa).

Residues 1-58 are disordered; that stretch reads MSAESGPGTRLRNLPVMGDGLETSQMSTTQAQAQPQPANAASTNPPPPETSNPNKPKR. The span at 23-43 shows a compositional bias: low complexity; the sequence is TSQMSTTQAQAQPQPANAAST. One can recognise a Bromo 1 domain in the interval 58-164; the sequence is RQTNQLQYLL…KLFLQKINEL (107 aa). Residue Lys-99 forms a Glycyl lysine isopeptide (Lys-Gly) (interchain with G-Cter in SUMO2) linkage. Disordered regions lie at residues 174 to 229, 242 to 352, and 463 to 615; these read VQAK…PAVT, VPPQ…KVSE, and EPVV…YEEK. Residues 197 to 211 are compositionally biased toward low complexity; the sequence is PNTTQASTPPQTQTP. Composition is skewed to pro residues over residues 212 to 227 and 243 to 266; these read QPNP…PFPA and PPQP…PAPQ. Positions 320 to 336 are enriched in basic and acidic residues; that stretch reads QRRESSRPVKPPKKDVP. The region spanning 348–457 is the Bromo 2 domain; that stretch reads SKVSEQLKCC…DVFEMRFAKM (110 aa). Ser-470 is modified (phosphoserine). Over residues 478–497 the composition is skewed to low complexity; that stretch reads KVVAPPSSSDSSSDSSSDSD. Phosphoserine; by CK2 occurs at positions 484, 488, 492, 494, 498, 499, and 503. Positions 484-503 are NPS region; it reads SSSDSSSDSSSDSDSSTDDS. The segment at 524–579 is BID region; sequence QLAALSQPQQNKPKKKEKDKKEKKKEKHKRKEEVEENKKSKAKEPPPKKTKKNNSS. The segment covering 535 to 553 has biased composition (basic residues); it reads KPKKKEKDKKEKKKEKHKR. The span at 554 to 570 shows a compositional bias: basic and acidic residues; it reads KEEVEENKKSKAKEPPP. A Glycyl lysine isopeptide (Lys-Gly) (interchain with G-Cter in SUMO2) cross-link involves residue Lys-585. Positions 600-682 constitute an NET domain; sequence ESEEEDKCKP…SCLRKKRKPQ (83 aa). Ser-601 bears the Phosphoserine mark. Basic and acidic residues predominate over residues 605 to 615; that stretch reads DKCKPMSYEEK. Glycyl lysine isopeptide (Lys-Gly) (interchain with G-Cter in SUMO2) cross-links involve residues Lys-645 and Lys-694. A disordered region spans residues 674-1100; the sequence is CLRKKRKPQA…PKKQELRAAS (427 aa). Low complexity predominate over residues 699-712; sequence SSSESESSSESSSS. The span at 724–744 shows a compositional bias: basic residues; it reads KSKKKGHPGREQKKHHHHHHQ. 3 stretches are compositionally biased toward pro residues: residues 751–785, 833–846, and 881–890; these read APVP…PPSM, PELP…PEHS, and PPKPARPPAV. Over residues 926–936 the composition is skewed to low complexity; that stretch reads MQMQLYLQQLQ. Composition is skewed to pro residues over residues 953–964, 973–996, and 1010–1034; these read QPPPPLPPPPHP, QPPP…PPRP, and QPPP…PQPA. Positions 1041–1050 are enriched in basic residues; that stretch reads QHHHSPRHHK. The tract at residues 1047–1362 is C-terminal (CTD) region; it reads RHHKSDPYST…LLSIFEENLF (316 aa). Residue Lys-1050 forms a Glycyl lysine isopeptide (Lys-Gly) (interchain with G-Cter in SUMO2) linkage. The segment covering 1071–1091 has biased composition (polar residues); the sequence is PQMSQFQSLTHQSPPQQNVQP. Lys-1111 carries the post-translational modification N6-acetyllysine; alternate. Residue Lys-1111 forms a Glycyl lysine isopeptide (Lys-Gly) (interchain with G-Cter in SUMO1); alternate linkage. A Glycyl lysine isopeptide (Lys-Gly) (interchain with G-Cter in SUMO2); alternate cross-link involves residue Lys-1111. A disordered region spans residues 1116–1339; that stretch reads HSPIIRSEPF…KREQERRRRE (224 aa). A phosphoserine mark is found at Ser-1117 and Ser-1126. Residues 1175–1196 show a composition bias toward basic and acidic residues; the sequence is PDKDKQKQEPKTPVAPKKDLKI. A Glycyl lysine isopeptide (Lys-Gly) (interchain with G-Cter in SUMO2) cross-link involves residue Lys-1197. Phosphoserine occurs at positions 1201 and 1204. Residues 1211–1223 show a composition bias toward low complexity; sequence TTPSSTAKSSSDS. Residues 1225–1284 show a composition bias toward basic and acidic residues; sequence EQFRRAAREKEEREKALKAQAEHAEKEKERLRQERMRSREDEDALEQARRAHEEARRRQE. Residues 1285-1313 are compositionally biased toward low complexity; the sequence is QQQQQRQEQQQQQQQQAAAVAAAATPQAQ. Residues 1323 to 1339 show a composition bias toward basic and acidic residues; the sequence is QQRELARKREQERRRRE.

This sequence belongs to the BET family. As to quaternary structure, interacts with p53/TP53; the interaction is direct. Interacts (via CTD region) with CDK9 and CCNT1, acting as an associated component of P-TEFb complex. Interacts with RELA (when acetylated at 'Lys-310'). Interacts (via NET domain) with NSD3, CHD4, BICRA and ATAD5. The interaction with BICRA bridges BRD4 to the GBAF complex. Interacts (via NET domain) with JMJD6 (via JmjC and N-terminal domains); the interaction is stronger in presence of ssRNA and recruits JMJD6 on distal enhancers. Interacts with NSD3. Interacts with NIPBL. In terms of assembly, interacts with SMC2. Interacts with NCAPD3. (Microbial infection) Interacts with bovine papillomavirus type 1 regulatory protein E2. This interactions may serve for the tethering of viral genomes to host mitotic chromosomes allowing successful partitioning of the viral genome during cell division. As to quaternary structure, (Microbial infection) Interacts with Epstein-Barr virus (EBV) protein EBNA1; this interaction facilitates transcriptional activation by EBNA1. In terms of assembly, (Microbial infection) Interacts with human herpes virus-8 (HHV-8) protein LANA. Phosphorylation by CK2 disrupt the intramolecular binding between the bromo domain 2 and the NPS region and promotes binding between the NPS and the BID regions, leading to activate the protein and promote binding to acetylated histones. In absence of phosphorylation, BRD4 does not localize to p53/TP53 target gene promoters, phosphorylation promoting recruitment to p53/TP53 target promoters. Ubiquitously expressed.

The protein localises to the nucleus. The protein resides in the chromosome. Its activity is regulated as follows. Inhibited by JQ1, a thieno-triazolo-1,4-diazepine derivative, which specifically inhibits members of the BET family (BRD2, BRD3 and BRD4). The first bromo domain is inhibited by GSK778 (iBET-BD1), which specifically inhibits the first bromo domain of members of the BET family (BRD2, BRD3 and BRD4). The second bromo domain is inhibited by ABBV-744, which specifically inhibits the second bromo domain of members of the BET family (BRD2, BRD3 and BRD4). The second bromo domain is inhibited by GSK046 (iBET-BD2), which specifically inhibits the second bromo domain of members of the BET family (BRD2, BRD3 and BRD4). In terms of biological role, chromatin reader protein that recognizes and binds acetylated histones and plays a key role in transmission of epigenetic memory across cell divisions and transcription regulation. Remains associated with acetylated chromatin throughout the entire cell cycle and provides epigenetic memory for postmitotic G1 gene transcription by preserving acetylated chromatin status and maintaining high-order chromatin structure. During interphase, plays a key role in regulating the transcription of signal-inducible genes by associating with the P-TEFb complex and recruiting it to promoters. Also recruits P-TEFb complex to distal enhancers, so called anti-pause enhancers in collaboration with JMJD6. BRD4 and JMJD6 are required to form the transcriptionally active P-TEFb complex by displacing negative regulators such as HEXIM1 and 7SKsnRNA complex from P-TEFb, thereby transforming it into an active form that can then phosphorylate the C-terminal domain (CTD) of RNA polymerase II. Regulates differentiation of naive CD4(+) T-cells into T-helper Th17 by promoting recruitment of P-TEFb to promoters. Promotes phosphorylation of 'Ser-2' of the C-terminal domain (CTD) of RNA polymerase II. According to a report, directly acts as an atypical protein kinase and mediates phosphorylation of 'Ser-2' of the C-terminal domain (CTD) of RNA polymerase II; these data however need additional evidences in vivo. In addition to acetylated histones, also recognizes and binds acetylated RELA, leading to further recruitment of the P-TEFb complex and subsequent activation of NF-kappa-B. Also acts as a regulator of p53/TP53-mediated transcription: following phosphorylation by CK2, recruited to p53/TP53 specific target promoters. Acts as a chromatin insulator in the DNA damage response pathway. Inhibits DNA damage response signaling by recruiting the condensin-2 complex to acetylated histones, leading to chromatin structure remodeling, insulating the region from DNA damage response by limiting spreading of histone H2AX/H2A.x phosphorylation. This chain is Bromodomain-containing protein 4 (BRD4), found in Homo sapiens (Human).